The primary structure comprises 443 residues: MANQPSVAVAHLGCEKNRVDTEHMLGLLVEAGYPVDSDEAFADYVIVNTCSFIQAAREESVRTLVELAEANKKIVITGCMAQHFQEELLEELPEAVALVGTGDYHKIVDVIQRAEAGERVKEVSPEPTYIADETVPRYRTTTEGTAYVRIAEGCDYGCAFCIIPHLRGKQRSRSIESIVAEAQQLAAEGVQELILISQITTNYGIDLYGKPQLAELLRALGEVDVPWIRMHYAYPTGLTPEVMAAIQETDNVLPYLDLPLQHSHPEVLRAMNRPWQGQVNDQIIEKIKTALPDAVLRTTFIVGFPGETDEHFEHLCEFVQRHEFDHVGVFTFSPEEGTPAFDLPNQLPQDVMDARRDRLMALQQPISWQQNQQEVGKTVQVLIEQEHPGSGQLIGRSPRFSADVDGLVYIDPGEAPSPRLGSLTPVQITDADAYDLQGQLVSQ.

In terms of domain architecture, MTTase N-terminal spans 5 to 116; sequence PSVAVAHLGC…IVDVIQRAEA (112 aa). The [4Fe-4S] cluster site is built by C14, C50, C79, C154, C158, and C161. Positions 140-370 constitute a Radical SAM core domain; sequence TTTEGTAYVR…ALQQPISWQQ (231 aa). In terms of domain architecture, TRAM spans 372-442; sequence QQEVGKTVQV…AYDLQGQLVS (71 aa).

It belongs to the methylthiotransferase family. RimO subfamily. [4Fe-4S] cluster is required as a cofactor.

It is found in the cytoplasm. The catalysed reaction is L-aspartate(89)-[ribosomal protein uS12]-hydrogen + (sulfur carrier)-SH + AH2 + 2 S-adenosyl-L-methionine = 3-methylsulfanyl-L-aspartate(89)-[ribosomal protein uS12]-hydrogen + (sulfur carrier)-H + 5'-deoxyadenosine + L-methionine + A + S-adenosyl-L-homocysteine + 2 H(+). Its function is as follows. Catalyzes the methylthiolation of an aspartic acid residue of ribosomal protein uS12. This Acaryochloris marina (strain MBIC 11017) protein is Ribosomal protein uS12 methylthiotransferase RimO.